The sequence spans 288 residues: N-acetylneuraminate lyase (288 aa).

Positions 44 and 45 each coordinate aceneuramate. Y133 acts as the Proton donor in catalysis. K161 acts as the Schiff-base intermediate with substrate in catalysis. Aceneuramate is bound by residues T163, G185, D187, E188, and S204.

The protein belongs to the DapA family. NanA subfamily. As to quaternary structure, homotetramer.

It is found in the cytoplasm. It catalyses the reaction aceneuramate = aldehydo-N-acetyl-D-mannosamine + pyruvate. It functions in the pathway amino-sugar metabolism; N-acetylneuraminate degradation; D-fructose 6-phosphate from N-acetylneuraminate: step 1/5. Functionally, catalyzes the reversible aldol cleavage of N-acetylneuraminic acid (sialic acid; Neu5Ac) to form pyruvate and N-acetylmannosamine (ManNAc) via a Schiff base intermediate. The protein is N-acetylneuraminate lyase of Clostridium perfringens (strain ATCC 13124 / DSM 756 / JCM 1290 / NCIMB 6125 / NCTC 8237 / Type A).